A 223-amino-acid chain; its full sequence is Ribosomal RNA small subunit methyltransferase G (223 aa).

S-adenosyl-L-methionine contacts are provided by residues Gly-82, Leu-87, 133 to 134, and Arg-151; that span reads AE.

The protein belongs to the methyltransferase superfamily. RNA methyltransferase RsmG family.

It localises to the cytoplasm. In terms of biological role, specifically methylates the N7 position of guanine in position 518 of 16S rRNA. The sequence is that of Ribosomal RNA small subunit methyltransferase G from Corynebacterium glutamicum (strain ATCC 13032 / DSM 20300 / JCM 1318 / BCRC 11384 / CCUG 27702 / LMG 3730 / NBRC 12168 / NCIMB 10025 / NRRL B-2784 / 534).